A 498-amino-acid polypeptide reads, in one-letter code: PE-PGRS family protein PE_PGRS33 (498 aa).

An essential for translocation to the cell surface region spans residues 1 to 30 (MSFVVTIPEALAAVATDLAGIGSTIGTANA). In terms of domain architecture, PE spans 1–93 (MSFVVTIPEA…AGSYAAAEAA (93 aa)). Positions 140–260 (GNGGAGGSGA…GLFFGVGGAG (121 aa)) are interacts with TLR2.

The protein belongs to the mycobacterial PE family. PGRS subfamily. As to quaternary structure, interacts with human TLR2.

Its subcellular location is the secreted. The protein localises to the cell wall. It localises to the cell surface. It is found in the cell outer membrane. Binding of Ca(2+) to PE_PGRS33 induces conformational changes and increases affinity for TLR2. Induces TNF-alpha release through human Toll-like receptor 2 (TLR2) signaling pathway, leading to macrophage apoptosis. The signaling pathway involves TLR2-dependent activation of the mitogen-activated protein kinase kinase kinase 5 (ASK1), which activates the p38 and JNK MAPKs, leading to enhanced expression of TNF-alpha and tumor necrosis factor receptor superfamily member 1A (TNFRI) genes. Signals are amplified through classical caspase 8-dependent mitochondrial release of cytochrome c, leading to the activation of caspases 9 and 3. Mediates Ca(2+)-dependent up-regulation of the anti-inflammatory cytokine IL-10. Mediates entry into macrophages in a TLR2-dependent mechanism and activates the TLR2-dependent pro-adhesive pathway. In Mycobacterium tuberculosis (strain ATCC 25618 / H37Rv), this protein is PE-PGRS family protein PE_PGRS33.